We begin with the raw amino-acid sequence, 264 residues long: Putative hydroxypyruvate isomerase (264 aa).

Catalysis depends on proton donor/acceptor residues Glu-145 and Glu-243.

Belongs to the hyi family.

It catalyses the reaction 3-hydroxypyruvate = 2-hydroxy-3-oxopropanoate. Catalyzes the reversible isomerization between hydroxypyruvate and 2-hydroxy-3-oxopropanoate (also termed tartronate semialdehyde). The sequence is that of Putative hydroxypyruvate isomerase (Gip) from Drosophila melanogaster (Fruit fly).